The chain runs to 133 residues: ATP synthase epsilon chain, sodium ion specific (133 aa).

Belongs to the ATPase epsilon chain family. In terms of assembly, F-type ATPases have 2 components, CF(1) - the catalytic core - and CF(0) - the membrane proton channel. CF(1) has five subunits: alpha(3), beta(3), gamma(1), delta(1), epsilon(1). CF(0) has three main subunits: a, b and c.

It localises to the cell membrane. Inhibited by nitrate. Its function is as follows. Produces ATP from ADP in the presence of a sodium gradient across the membrane. This chain is ATP synthase epsilon chain, sodium ion specific (atpC), found in Acetobacterium woodii (strain ATCC 29683 / DSM 1030 / JCM 2381 / KCTC 1655 / WB1).